The primary structure comprises 1217 residues: WD repeat-containing protein on Y chromosome (1217 aa).

WD repeat units follow at residues 155 to 199 (EDMT…LRSA), 323 to 362 (RIPL…EPSA), 366 to 405 (GHNG…LLQT), 456 to 495 (THAA…RKII), 508 to 547 (TIDI…VVRN), 595 to 635 (FHTD…RRYN), 740 to 779 (KVGD…IPEA), and 823 to 862 (GHLK…LGTL). 2 disordered regions span residues 910–929 (QVKR…VEDT) and 1033–1217 (AGGQ…KDKP). The span at 919–929 (EREDEGEVEDT) shows a compositional bias: acidic residues. Composition is skewed to polar residues over residues 1041–1054 (RASS…TNSI), 1085–1107 (FGPN…SQLK), and 1137–1179 (PVST…TSAN). Residues 1181 to 1190 (KPDIMPVKIK) are compositionally biased toward low complexity. A compositionally biased stretch (polar residues) spans 1198 to 1210 (RNTAPVQITTSIA).

In Drosophila mojavensis (Fruit fly), this protein is WD repeat-containing protein on Y chromosome.